The chain runs to 757 residues: MASLEDLIPTVNKLQDVMYDSGIDTLDLPILAVVGSQSSGKSSILETLVGRDFLPRGTGIVTRRPLVLQLNNISPNSPLIEEDDNSVNPHDEVTKISGFEAGTKPLEYRGKERNHADEWGEFLHIPGKRFYDFDDIKREIENETARIAGKDKGISKIPINLKVFSPHVLNLTLVDLPGITKVPIGEQPPDIEKQIKNLILDYIATPNCLILAVSPANVDLVNSESLKLAREVDPQGKRTIGVITKLDLMDSGTNALDILSGKMYPLKLGFVGVVNRSQQDIQLNKTVEESLDKEEDYFRKHPVYRTISTKCGTRYLAKLLNQTLLSHIRDKLPDIKTKLNTLISQTEQELARYGGVGATTNESRASLVLQLMNKFSTNFISSIDGTSSDINTKELCGGARIYYIYNNVFGNSLKSIDPTSNLSVLDVRTAIRNSTGPRPTLFVPELAFDLLVKPQIKLLLEPSQRCVELVYEELMKICHKCGSAELARYPKLKSMLIEVISELLRERLQPTRSYVESLIDIHRAYINTNHPNFLSATEAMDDIMKTRRKRNQELLKSKLSQQENGQTNGINGTSSISSNIDQDSAKNSDYDDDGIDAESKQTKDKFLNYFFGKDKKGQPVFDASDKKRSIAGDGNIEDFRNLQISDFSLGDIDDLENAEPPLTEREELECELIKRLIVSYFDIIREMIEDQVPKAVMCLLVNYCKDSVQNRLVTKLYKETLFEELLVEDQTLAQDRELCVKSLGVYKKAATLISNIL.

One can recognise a Dynamin-type G domain in the interval 25–333 (TLDLPILAVV…LLSHIRDKLP (309 aa)). Positions 35–42 (GSQSSGKS) are G1 motif. Position 35–42 (35–42 (GSQSSGKS)) interacts with GTP. Positions 61–63 (VTR) are G2 motif. The segment at 175–178 (DLPG) is G3 motif. Residues 175–179 (DLPGI) and 244–247 (TKLD) contribute to the GTP site. Residues 244–247 (TKLD) form a G4 motif region. Residues 274–277 (VNRS) form a G5 motif region. Residues 557-597 (SKLSQQENGQTNGINGTSSISSNIDQDSAKNSDYDDDGIDA) form a disordered region. Residues 567–580 (TNGINGTSSISSNI) show a composition bias toward low complexity. Phosphoserine is present on Ser629. Residues 670 to 757 (CELIKRLIVS…KAATLISNIL (88 aa)) enclose the GED domain.

It belongs to the TRAFAC class dynamin-like GTPase superfamily. Dynamin/Fzo/YdjA family. As to quaternary structure, interacts with FIS1 and MDV1.

It is found in the mitochondrion outer membrane. The catalysed reaction is GTP + H2O = GDP + phosphate + H(+). Microtubule-associated force-producing protein that participates mitochondrial fission. Fission of mitochondria occurs in many cell types and constitutes an important step in mitochondria morphology, which is balanced between fusion and fission. Functions antagonistically with FZO1. The sequence is that of Dynamin-related protein DNM1 (DNM1) from Saccharomyces cerevisiae (strain ATCC 204508 / S288c) (Baker's yeast).